The primary structure comprises 519 residues: Histidine ammonia-lyase (519 aa).

The 5-imidazolinone (Ala-Gly) cross-link spans 146–148 (ASG). Ser-147 carries the 2,3-didehydroalanine (Ser) modification.

Belongs to the PAL/histidase family. In terms of processing, contains an active site 4-methylidene-imidazol-5-one (MIO), which is formed autocatalytically by cyclization and dehydration of residues Ala-Ser-Gly.

The protein resides in the cytoplasm. The enzyme catalyses L-histidine = trans-urocanate + NH4(+). The protein operates within amino-acid degradation; L-histidine degradation into L-glutamate; N-formimidoyl-L-glutamate from L-histidine: step 1/3. In Bradyrhizobium diazoefficiens (strain JCM 10833 / BCRC 13528 / IAM 13628 / NBRC 14792 / USDA 110), this protein is Histidine ammonia-lyase.